Here is a 203-residue protein sequence, read N- to C-terminus: uncharacterized protein (203 aa).

Residues 180-200 (VYLLLFGIPLLILIFLIIFFI) traverse the membrane as a helical segment.

Its subcellular location is the virion. It is found in the host membrane. This is an uncharacterized protein from Acanthamoeba polyphaga (Amoeba).